We begin with the raw amino-acid sequence, 241 residues long: Demethylmenaquinone methyltransferase (241 aa).

S-adenosyl-L-methionine is bound by residues Thr-60, Asp-81, and 106–107; that span reads DA.

Belongs to the class I-like SAM-binding methyltransferase superfamily. MenG/UbiE family.

It catalyses the reaction a 2-demethylmenaquinol + S-adenosyl-L-methionine = a menaquinol + S-adenosyl-L-homocysteine + H(+). Its pathway is quinol/quinone metabolism; menaquinone biosynthesis; menaquinol from 1,4-dihydroxy-2-naphthoate: step 2/2. Methyltransferase required for the conversion of demethylmenaquinol (DMKH2) to menaquinol (MKH2). The polypeptide is Demethylmenaquinone methyltransferase (Staphylococcus epidermidis (strain ATCC 35984 / DSM 28319 / BCRC 17069 / CCUG 31568 / BM 3577 / RP62A)).